An 85-amino-acid chain; its full sequence is UPF0291 protein str0508 (85 aa).

The segment at 62–85 (TPEKLRQVQREKGLHGRSLDDPES) is disordered.

It belongs to the UPF0291 family.

It is found in the cytoplasm. In Streptococcus thermophilus (strain CNRZ 1066), this protein is UPF0291 protein str0508.